The following is a 712-amino-acid chain: Lactoperoxidase (712 aa).

The signal sequence occupies residues 1–21; it reads MLVCLHLQVFLASVALFEVAA. Residues 22–117 constitute a propeptide that is removed on maturation; the sequence is SDTIAQAAST…TDPSLDLTAL (96 aa). Asn-106 is a glycosylation site (N-linked (GlcNAc...) (complex) asparagine; alternate). Residue Asn-106 is glycosylated (N-linked (GlcNAc...) (hybrid) asparagine; alternate). 4 cysteine pairs are disulfide-bonded: Cys-123–Cys-284, Cys-132–Cys-145, Cys-246–Cys-256, and Cys-250–Cys-274. N-linked (GlcNAc...) (complex) asparagine; alternate glycosylation is present at Asn-212. N-linked (GlcNAc...) (hybrid) asparagine; alternate glycosylation is present at Asn-212. A heme b-binding site is contributed by Asp-225. The Proton acceptor role is filled by His-226. Asp-227 serves as a coordination point for Ca(2+). Residues Thr-301, Phe-303, Asp-305, and Ser-307 each coordinate Ca(2+). Ser-315 bears the Phosphoserine mark. An N-linked (GlcNAc...) (high mannose) asparagine glycan is attached at Asn-322. Cys-354 and Cys-365 form a disulfide bridge. A glycan (N-linked (GlcNAc...) asparagine) is linked at Asn-358. Glu-375 provides a ligand contact to heme b. Residue Asn-449 is glycosylated (N-linked (GlcNAc...) (complex) asparagine; alternate). Asn-449 is a glycosylation site (N-linked (GlcNAc...) (hybrid) asparagine; alternate). An N-linked (GlcNAc...) (high mannose) asparagine; alternate glycan is attached at Asn-449. His-468 is a binding site for heme b. At Tyr-482 the chain carries 3'-nitrotyrosine. Intrachain disulfides connect Cys-573-Cys-630 and Cys-671-Cys-696.

It belongs to the peroxidase family. XPO subfamily. Ca(2+) is required as a cofactor. Requires heme b as cofactor. Mammary gland; milk.

The protein resides in the secreted. It localises to the cytoplasm. It carries out the reaction 2 a phenolic donor + H2O2 = 2 a phenolic radical donor + 2 H2O. It catalyses the reaction thiocyanate + H2O2 + H(+) = hypothiocyanous acid + H2O. The enzyme catalyses iodide + H2O2 = hypoiodite + H2O. Inhibited by small molecule methimazole (MMZ). Its function is as follows. Heme-containing oxidoreductase which catalyzes the conversion of thiocyanate (SCN(-)) into antimicrobial agent hypothiocyanous acid (OSCN(-)) in the presence of hydrogen peroxide (H2O2). Also involved in the conversion of iodide (I(-)) into hypoiodite (IO(-)) in the presence of H2O2. Responsible for the inactivation of a wide range of micro-organisms and hence, important component of defense mechanism. Shows antibacterial properties against several Gram-positive bacteria including some Staphylococcus species and Gram-negative bacteria including E.coli, P.aeruginosa and some Salmonella species. Inhibits the growth of several fungi including A.niger, Trichoderma species, C.cassicola, P.meadii and C.salmonicolor. Does not have anti-fungal activity towards C.albicans and Pythium species. May protect the udder from infection and may promote growth in newborns. May be implicated in airway host defense against infection. May contribute to maintaining an appropriate H2O2 cellular level, therefore protecting cells from H2O2-caused injuries and inflammation. The polypeptide is Lactoperoxidase (LPO) (Capra hircus (Goat)).